The chain runs to 376 residues: Chaperone protein DnaJ (376 aa).

A J domain is found at aspartate 5–glycine 70. The segment at glycine 132–serine 210 adopts a CR-type zinc-finger fold. Residues cysteine 145, cysteine 148, cysteine 162, cysteine 165, cysteine 184, cysteine 187, cysteine 198, and cysteine 201 each contribute to the Zn(2+) site. CXXCXGXG motif repeat units lie at residues cysteine 145–glycine 152, cysteine 162–glycine 169, cysteine 184–glycine 191, and cysteine 198–glycine 205.

It belongs to the DnaJ family. In terms of assembly, homodimer. Zn(2+) serves as cofactor.

The protein resides in the cytoplasm. Its function is as follows. Participates actively in the response to hyperosmotic and heat shock by preventing the aggregation of stress-denatured proteins and by disaggregating proteins, also in an autonomous, DnaK-independent fashion. Unfolded proteins bind initially to DnaJ; upon interaction with the DnaJ-bound protein, DnaK hydrolyzes its bound ATP, resulting in the formation of a stable complex. GrpE releases ADP from DnaK; ATP binding to DnaK triggers the release of the substrate protein, thus completing the reaction cycle. Several rounds of ATP-dependent interactions between DnaJ, DnaK and GrpE are required for fully efficient folding. Also involved, together with DnaK and GrpE, in the DNA replication of plasmids through activation of initiation proteins. This is Chaperone protein DnaJ from Shewanella halifaxensis (strain HAW-EB4).